A 259-amino-acid polypeptide reads, in one-letter code: Large ribosomal subunit protein uL4 (259 aa).

The segment at 47 to 67 (WGTDPMAGKRTTAESFGSGRG) is disordered.

This sequence belongs to the universal ribosomal protein uL4 family. Part of the 50S ribosomal subunit.

One of the primary rRNA binding proteins, this protein initially binds near the 5'-end of the 23S rRNA. It is important during the early stages of 50S assembly. It makes multiple contacts with different domains of the 23S rRNA in the assembled 50S subunit and ribosome. Its function is as follows. Forms part of the polypeptide exit tunnel. The polypeptide is Large ribosomal subunit protein uL4 (Methanosphaera stadtmanae (strain ATCC 43021 / DSM 3091 / JCM 11832 / MCB-3)).